The primary structure comprises 219 residues: Transmembrane protein 17B (219 aa).

N-linked (GlcNAc...) asparagine glycosylation occurs at Asn26. A run of 4 helical transmembrane segments spans residues 51-71, 84-104, 116-136, and 147-167; these read MMLY…IITM, ILLT…LYIG, LAGF…FLLT, and LAVH…SFLV. 2 N-linked (GlcNAc...) asparagine glycosylation sites follow: Asn195 and Asn203.

It belongs to the TMEM17 family. Part of the tectonic-like complex (also named B9 complex).

It localises to the cell projection. The protein localises to the cilium membrane. Its function is as follows. Transmembrane component of the tectonic-like complex, a complex localized at the transition zone of primary cilia and acting as a barrier that prevents diffusion of transmembrane proteins between the cilia and plasma membranes. Required for ciliogenesis and sonic hedgehog/SHH signaling. In Xenopus tropicalis (Western clawed frog), this protein is Transmembrane protein 17B (Tmem17-b).